The following is a 166-amino-acid chain: Large ribosomal subunit protein uL10 (166 aa).

The protein belongs to the universal ribosomal protein uL10 family. As to quaternary structure, part of the ribosomal stalk of the 50S ribosomal subunit. The N-terminus interacts with L11 and the large rRNA to form the base of the stalk. The C-terminus forms an elongated spine to which L12 dimers bind in a sequential fashion forming a multimeric L10(L12)X complex.

Forms part of the ribosomal stalk, playing a central role in the interaction of the ribosome with GTP-bound translation factors. This Ureaplasma urealyticum serovar 10 (strain ATCC 33699 / Western) protein is Large ribosomal subunit protein uL10.